Here is a 200-residue protein sequence, read N- to C-terminus: Interferon lambda-1 (200 aa).

The first 19 residues, methionine 1–alanine 19, serve as a signal peptide directing secretion. Asparagine 65 is a glycosylation site (N-linked (GlcNAc...) asparagine). Cysteine 68 and cysteine 164 form a disulfide bridge.

It belongs to the lambda interferon family.

Its subcellular location is the secreted. Its function is as follows. Cytokine with antiviral, antitumour and immunomodulatory activities. Plays a critical role in the antiviral host defense, predominantly in the epithelial tissues. Acts as a ligand for the heterodimeric class II cytokine receptor composed of IL10RB and IFNLR1, and receptor engagement leads to the activation of the JAK/STAT signaling pathway resulting in the expression of IFN-stimulated genes (ISG), which mediate the antiviral state. Has a restricted receptor distribution and therefore restricted targets: is primarily active in epithelial cells and this cell type-selective action is because of the epithelial cell-specific expression of its receptor IFNLR1. Exerts an immunomodulatory effect by up-regulating MHC class I antigen expression. This is Interferon lambda-1 (IFNL1) from Homo sapiens (Human).